We begin with the raw amino-acid sequence, 86 residues long: Small ribosomal subunit protein bS20 (86 aa).

The span at Met1–Ala11 shows a compositional bias: basic residues. The disordered stretch occupies residues Met1–Ser26.

Belongs to the bacterial ribosomal protein bS20 family.

In terms of biological role, binds directly to 16S ribosomal RNA. This is Small ribosomal subunit protein bS20 from Pseudoalteromonas translucida (strain TAC 125).